Here is a 284-residue protein sequence, read N- to C-terminus: uncharacterized protein (284 aa).

Positions 1–27 (MSNLPTSTPVSPSNLAEENPKSNNPES) are enriched in polar residues. Disordered stretches follow at residues 1–29 (MSNLPTSTPVSPSNLAEENPKSNNPESSE) and 248–284 (TRDSKRQQKKGKTTTVARSTNKKNKSMMGTVKDLKKK).

This is an uncharacterized protein from Caenorhabditis elegans.